Reading from the N-terminus, the 333-residue chain is D-fructose 1,6-bisphosphatase class 2/sedoheptulose 1,7-bisphosphatase (333 aa).

Mn(2+) is bound by residues Asp-33, Glu-57, Asp-85, and Glu-88. Residues 88 to 90, Tyr-119, 164 to 166, and 186 to 188 contribute to the substrate site; these read EGT, RAR, and DGD. Glu-213 is a Mn(2+) binding site.

This sequence belongs to the FBPase class 2 family. Homotetramer. Mn(2+) serves as cofactor.

It catalyses the reaction beta-D-fructose 1,6-bisphosphate + H2O = beta-D-fructose 6-phosphate + phosphate. It carries out the reaction D-sedoheptulose 1,7-bisphosphate + H2O = D-sedoheptulose 7-phosphate + phosphate. It functions in the pathway carbohydrate biosynthesis; Calvin cycle. Functionally, catalyzes the hydrolysis of fructose 1,6-bisphosphate (Fru 1,6-P2) and sedoheptulose 1,7-bisphosphate (Sed 1,7-P2) to fructose 6-phosphate and sedoheptulose 7-phosphate, respectively. The polypeptide is D-fructose 1,6-bisphosphatase class 2/sedoheptulose 1,7-bisphosphatase (Prochlorococcus marinus (strain MIT 9515)).